A 1748-amino-acid polypeptide reads, in one-letter code: Flagellar attachment zone protein 1 (1748 aa).

Coiled coils occupy residues 613–657 (REQE…KLQK), 684–864 (VTLD…HKVR), and 903–1663 (NDHM…SALE). Tandem repeats lie at residues 1012–1025 (EELELKAAENEKLA), 1026–1039 (EELELKAAENEKLA), 1040–1053 (EELELKAAENEKLA), 1054–1067 (EALDLKAAENEKLA), 1068–1081 (EELELKVAENEKLA), 1082–1095 (EELELKVAENEKLA), 1096–1109 (EELELKAAENEKLA), 1110–1123 (EELELKAAENEKLA), 1124–1137 (EELELKAAENEKLA), 1138–1151 (EELELKAAENEKLA), 1152–1165 (EALDLKAAENEKLA), 1166–1179 (EELDLKAAENEKLA), 1180–1193 (EELELKVAENEKLA), 1194–1207 (EELELKAAENEKLA), 1208–1221 (EELELKAAENEKLA), 1222–1235 (EELELKAAENEKLA), 1236–1249 (EELELKVAENEKLA), 1250–1263 (EELELKAAENEKLA), 1264–1277 (EELELKAAENEKLA), 1278–1291 (EELELKAAENEKLA), 1292–1305 (EELELKVAENEKLA), 1306–1319 (EELELKAAENEKLA), 1320–1333 (EELELKAAENEKLA), 1334–1347 (EELELKAAENEKLA), 1348–1361 (EELELKAAENEKLA), 1362–1375 (EELELKAAENEKLA), 1376–1389 (EELELKAAENEKLA), 1390–1403 (EELELKAAENEKLA), 1404–1417 (EELELKAAENEKLA), 1418–1431 (EELELKAAENEKLA), 1432–1445 (EELELKAAENEKLA), 1446–1459 (EELELKAAENEKLA), 1460–1473 (EELELKAAENEKLA), 1474–1487 (EELELKAAENEKLA), 1488–1501 (EELELKAAENEKLA), 1502–1515 (EELELKAAENEKLA), 1516–1529 (EELELKAAENEKLA), 1530–1543 (EELELKAAENEKLA), 1544–1557 (EELELKVAENEKLA), 1558–1571 (EELELKVAENEKLA), and 1572–1585 (EELELKVAENKRLA). The 41 X 14 AA tandem repeats of E-E-L-E-L-K-[VA]-A-E-N-E-K-L-A stretch occupies residues 1012-1529 (EELELKAAEN…LKAAENEKLA (518 aa)).

The protein resides in the cell projection. It is found in the cilium. Its subcellular location is the flagellum. Functionally, a component of FAZ filament that is required for correct FAZ assembly and attachment. Not essential for new flagellum growth. In Trypanosoma brucei gambiense (strain MHOM/CI/86/DAL972), this protein is Flagellar attachment zone protein 1.